The primary structure comprises 164 residues: Ribosome maturation factor RimP (164 aa).

This sequence belongs to the RimP family.

It is found in the cytoplasm. Required for maturation of 30S ribosomal subunits. This Thermodesulfovibrio yellowstonii (strain ATCC 51303 / DSM 11347 / YP87) protein is Ribosome maturation factor RimP.